Reading from the N-terminus, the 185-residue chain is Threonylcarbamoyl-AMP synthase (185 aa).

In terms of domain architecture, YrdC-like spans Met-1–Gly-185.

This sequence belongs to the SUA5 family. TsaC subfamily.

Its subcellular location is the cytoplasm. It catalyses the reaction L-threonine + hydrogencarbonate + ATP = L-threonylcarbamoyladenylate + diphosphate + H2O. In terms of biological role, required for the formation of a threonylcarbamoyl group on adenosine at position 37 (t(6)A37) in tRNAs that read codons beginning with adenine. Catalyzes the conversion of L-threonine, HCO(3)(-)/CO(2) and ATP to give threonylcarbamoyl-AMP (TC-AMP) as the acyladenylate intermediate, with the release of diphosphate. This is Threonylcarbamoyl-AMP synthase from Photobacterium profundum (strain SS9).